A 627-amino-acid polypeptide reads, in one-letter code: WPP domain-interacting tail-anchored protein 2 (627 aa).

Coiled-coil stretches lie at residues 81–152 (CGIL…RRTL), 188–218 (LEKS…KLHY), and 312–542 (TLRE…KILR). The tract at residues 577–597 (SLQEDERTREEPEKQSVSEKS) is disordered. The span at 580–597 (EDERTREEPEKQSVSEKS) shows a compositional bias: basic and acidic residues. A helical membrane pass occupies residues 606-626 (LKHILVVALVFVLFCSFFGVT).

In terms of assembly, component of Ran complexes at least composed of WIT1 or WIT2, RANGAP1 or RANGAP2, and WIP1 or WIP2 or WIP3. Interacts with KAKU1. Core component of the LINC complex which is composed of inner nuclear membrane SUN domain-containing proteins coupled to outer nuclear membrane WIP and WIT proteins. The LINC complex also involves nucleoskeletal proteins CRWN/LINC and possibly KAKU4 and the cytoskeletal myosin KAKU1. Interacts with WIP1, WIP2 and WIP3. Ubiquitous.

Its subcellular location is the membrane. Its function is as follows. Together with WIT1, required for the nuclear envelope docking of RANGAP proteins in root tips. Plays a role in nuclear shape determination. As component of the SUN-WIP-WIT2-KAKU1 complex, mediates the transfer of cytoplasmic forces to the nuclear envelope (NE), leading to nuclear shape changes. The protein is WPP domain-interacting tail-anchored protein 2 (WIT2) of Arabidopsis thaliana (Mouse-ear cress).